The sequence spans 1196 residues: Probable cation-transporting ATPase 13A4 (1196 aa).

At Met-1–Arg-31 the chain is on the cytoplasmic side. The stretch at Lys-32 to Trp-52 is an intramembrane region. The Cytoplasmic segment spans residues Arg-53–Leu-197. A helical membrane pass occupies residues Leu-198–Phe-218. At Ser-219–Lys-223 the chain is on the lumenal side. A helical membrane pass occupies residues Glu-224 to Leu-244. Topologically, residues Arg-245–Arg-400 are cytoplasmic. Residues Phe-401–Val-421 traverse the membrane as a helical segment. Over Leu-422–Asp-436 the chain is Lumenal. A helical transmembrane segment spans residues Val-437–Ala-457. Residues Gln-458–Ser-900 lie on the Cytoplasmic side of the membrane. The active-site 4-aspartylphosphate intermediate is Asp-486. The Mg(2+) site is built by Asp-848 and Asp-852. Residues Phe-901–Leu-921 form a helical membrane-spanning segment. Residues Tyr-922–Gln-932 are Lumenal-facing. Residues Phe-933–Ala-953 form a helical membrane-spanning segment. Topologically, residues Tyr-954–Leu-972 are cytoplasmic. The chain crosses the membrane as a helical span at residues Leu-973–Val-993. Residues Gln-994–Ser-1035 are Lumenal-facing. The helical transmembrane segment at Phe-1036–Phe-1056 threads the bilayer. Residues Ser-1057–Tyr-1070 lie on the Cytoplasmic side of the membrane. Residues Ile-1071–Ile-1091 form a helical membrane-spanning segment. The Lumenal portion of the chain corresponds to Pro-1092–Ala-1109. The helical transmembrane segment at Ser-1110–Ile-1130 threads the bilayer. The Cytoplasmic segment spans residues Glu-1131–Leu-1196.

The protein belongs to the cation transport ATPase (P-type) (TC 3.A.3) family. Type V subfamily. Expressed in heart, placenta, liver, skeletal muscles, and pancreas. Lower levels of expression are also detected in brain, lung and kidney. Weakly expressed in the adult brain. Expression in fetal brain is higher than in adult brain, with levels similar to several other fetal tissues including spleen and skeletal muscle. In adult brain expressed at low levels in all tissues examined, including the temporal lobe and putamen. Highly expressed in the respiratory and integumentary systems.

Its subcellular location is the early endosome membrane. It is found in the late endosome membrane. The protein resides in the recycling endosome membrane. It catalyses the reaction ATP + H2O = ADP + phosphate + H(+). The sequence is that of Probable cation-transporting ATPase 13A4 (ATP13A4) from Homo sapiens (Human).